The chain runs to 293 residues: Bifunctional protein FolD (293 aa).

NADP(+) is bound by residues 166–168, Ser191, and Ile232; that span reads GRS.

This sequence belongs to the tetrahydrofolate dehydrogenase/cyclohydrolase family. As to quaternary structure, homodimer.

It carries out the reaction (6R)-5,10-methylene-5,6,7,8-tetrahydrofolate + NADP(+) = (6R)-5,10-methenyltetrahydrofolate + NADPH. The catalysed reaction is (6R)-5,10-methenyltetrahydrofolate + H2O = (6R)-10-formyltetrahydrofolate + H(+). The protein operates within one-carbon metabolism; tetrahydrofolate interconversion. Functionally, catalyzes the oxidation of 5,10-methylenetetrahydrofolate to 5,10-methenyltetrahydrofolate and then the hydrolysis of 5,10-methenyltetrahydrofolate to 10-formyltetrahydrofolate. In Synechococcus sp. (strain JA-2-3B'a(2-13)) (Cyanobacteria bacterium Yellowstone B-Prime), this protein is Bifunctional protein FolD.